We begin with the raw amino-acid sequence, 395 residues long: XK-related protein 8 (395 aa).

The Cytoplasmic portion of the chain corresponds to 1 to 12; the sequence is MPWSSRGALLRD. The helical transmembrane segment at 13–33 threads the bilayer; the sequence is LVLGVLGTAAFLLDLGTDLWA. Over 34-47 the chain is Extracellular; it reads AVQYALGGRYLWAA. A helical membrane pass occupies residues 48-68; it reads LVLALLGLASVALQLFSWLWL. Residues 69–158 are Cytoplasmic-facing; that stretch reads RADPAGLHGS…VLAIMLQSGR (90 aa). A helical transmembrane segment spans residues 159 to 179; that stretch reads AEYYQWVGICTSFLGISWALL. At 180–200 the chain is on the extracellular side; the sequence is DYHRALRTCLPSRPLLGLGSS. The chain crosses the membrane as a helical span at residues 201–221; it reads VIYFLWNLLLLWPRVLAVALF. The Cytoplasmic portion of the chain corresponds to 222 to 223; it reads SA. A helical transmembrane segment spans residues 224-244; it reads LFPSYVALHFLGLWLVLLLWV. The Extracellular portion of the chain corresponds to 245–258; the sequence is WLQGTDFMPDPSSE. Residues 259–279 form a helical membrane-spanning segment; the sequence is WLYQVTVATILYFSWFNVAEG. Topologically, residues 280–284 are cytoplasmic; that stretch reads RTRGR. Residues 285–305 form a helical membrane-spanning segment; sequence AIIHFAFLLSDSILLVATWVT. The Extracellular portion of the chain corresponds to 306 to 312; the sequence is HSSWLPS. Residues 313 to 333 form a helical membrane-spanning segment; sequence GIPLQLWLPVGCGCFFLGLAL. Residues 334 to 395 are Cytoplasmic-facing; it reads RLVYYHWLHP…KDEAALPVKG (62 aa). At S362 the chain carries Phosphoserine. Position 375 is a phosphothreonine (T375).

This sequence belongs to the XK family. Interacts with BSG and NPTN; which act as chaperones to localize XKR8 at the cell membrane. As to quaternary structure, homodimer. Post-translationally, undergoes proteolytic processing by caspase-3 (CASP3), leading to its activation. Phosphorylation at Thr-375 activates the phospholipid scramblase activity.

It is found in the cell membrane. The protein resides in the cytoplasm. Its subcellular location is the perinuclear region. The catalysed reaction is a 1,2-diacyl-sn-glycero-3-phospho-L-serine(in) = a 1,2-diacyl-sn-glycero-3-phospho-L-serine(out). Activated upon caspase cleavage to generate the XK-related protein 8, processed form. Does not act prior the onset of apoptosis. Phospholipid scramblase that promotes phosphatidylserine exposure on apoptotic cell surface. Phosphatidylserine is a specific marker only present at the surface of apoptotic cells and acts as a specific signal for engulfment. Required for the clearance of apoptotic cells, such as engulfment of apoptotic germ cells by Sertoli cells, clearance of senescent neutrophils or regulation of bipolar cell numbers in the retina. Has no effect on calcium-induced exposure of phosphatidylserine. Promotes myoblast differentiation and survival. The sequence is that of XK-related protein 8 from Pan troglodytes (Chimpanzee).